The primary structure comprises 146 residues: UPF0735 ACT domain-containing protein CHY_1913 (146 aa).

The 76-residue stretch at 70–145 (TLALNLEHRA…GVSKVELVGQ (76 aa)) folds into the ACT domain.

Belongs to the UPF0735 family.

The sequence is that of UPF0735 ACT domain-containing protein CHY_1913 from Carboxydothermus hydrogenoformans (strain ATCC BAA-161 / DSM 6008 / Z-2901).